The primary structure comprises 508 residues: PTS system mannitol-specific EIICB component (508 aa).

At 1–30 the chain is on the cytoplasmic side; it reads MSQTETQENKGLGRKVQAFGSFLSSMIMPN. Residues 19–351 enclose the PTS EIIC type-2 domain; that stretch reads FGSFLSSMIM…LKFTKEPEED (333 aa). A helical membrane pass occupies residues 31 to 52; sequence IGAFIAWGFIAAIFIDGGWWPN. At 53-56 the chain is on the extracellular side; it reads KDLS. The chain crosses the membrane as a helical span at residues 57–77; it reads ELAGPMISYLIPLLIAYSGGR. Residues 78 to 141 are Cytoplasmic-facing; that stretch reads LIHEMRGGII…QGFEMLFNNF (64 aa). A helical transmembrane segment spans residues 142–163; sequence SAGILGFIMTIVGFKILAPIME. The Extracellular portion of the chain corresponds to 164-172; sequence FIMHILSLA. The chain crosses the membrane as a helical span at residues 173–193; it reads VEALVHAHLLPLVSIIVEPAK. The Cytoplasmic portion of the chain corresponds to 194 to 280; that stretch reads IVFLNNAINH…VLMRPLLFIA (87 aa). A helical transmembrane segment spans residues 281-300; that stretch reads VILGGMTGVATYSLLDFGFK. Topologically, residues 301-320 are extracellular; it reads SPASPGSFIVYMLNAPKGEF. Residues 321-342 form a helical membrane-spanning segment; sequence LHMVLGVLLAAIVSFIVAALIL. At 343–508 the chain is on the cytoplasmic side; that stretch reads KFTKEPEEDL…RYDELLENLK (166 aa). Residues 355–400 are disordered; that stretch reads ATEKMEASKGKKSSVSSKLKGNEDNNATSTTASTSTSENNEEQSEE. The span at 367-392 shows a compositional bias: low complexity; it reads SSVSSKLKGNEDNNATSTTASTSTSE. Positions 420-508 constitute a PTS EIIB type-2 domain; that stretch reads NHVIFACDAG…RYDELLENLK (89 aa). The active-site Phosphocysteine intermediate; for EIIB activity is the C426. A Phosphocysteine; by EIIA modification is found at C426.

Homodimer.

It localises to the cell membrane. It carries out the reaction D-mannitol(out) + N(pros)-phospho-L-histidyl-[protein] = D-mannitol 1-phosphate(in) + L-histidyl-[protein]. The phosphoenolpyruvate-dependent sugar phosphotransferase system (sugar PTS), a major carbohydrate active transport system, catalyzes the phosphorylation of incoming sugar substrates concomitantly with their translocation across the cell membrane. The enzyme II CmtAB PTS system is involved in D-mannitol transport. The polypeptide is PTS system mannitol-specific EIICB component (mtlA) (Staphylococcus saprophyticus subsp. saprophyticus (strain ATCC 15305 / DSM 20229 / NCIMB 8711 / NCTC 7292 / S-41)).